The following is a 190-amino-acid chain: Peptidyl-tRNA hydrolase (190 aa).

Position 14 (Tyr14) interacts with tRNA. The active-site Proton acceptor is the His19. Tyr64, Asn66, and Asn112 together coordinate tRNA.

This sequence belongs to the PTH family. In terms of assembly, monomer.

The protein resides in the cytoplasm. It catalyses the reaction an N-acyl-L-alpha-aminoacyl-tRNA + H2O = an N-acyl-L-amino acid + a tRNA + H(+). Functionally, hydrolyzes ribosome-free peptidyl-tRNAs (with 1 or more amino acids incorporated), which drop off the ribosome during protein synthesis, or as a result of ribosome stalling. Catalyzes the release of premature peptidyl moieties from peptidyl-tRNA molecules trapped in stalled 50S ribosomal subunits, and thus maintains levels of free tRNAs and 50S ribosomes. The chain is Peptidyl-tRNA hydrolase from Chlorobium chlorochromatii (strain CaD3).